The primary structure comprises 299 residues: MDFPQQLEACVKQANQALSRFIAPLPFQNTPVVETMQYGALLGGKRLRPFLVYATGHMFGVSTNTLDAPAAAVECIHAYSLIHDDLPAMDDDDLRRGLPTCHVKFGEANAILAGDALQTLAFSILSDADMPEVSDRDRISMISELASASGIAGMCGGQALDLDAEGKHVPLDALERIHRHKTGALIRAAVRLGALSAGDKGRRALPVLDKYAESIGLAFQVQDDILDVVGDTATLGKRQGADQQLGKSTYPALLGLEQARKKARDLIDDARQSLKQLAEQSLDTSALEALADYIIQRNK.

Isopentenyl diphosphate-binding residues include lysine 45, arginine 48, and histidine 77. Residues aspartate 84 and aspartate 90 each contribute to the Mg(2+) site. Arginine 95 lines the (2E)-geranyl diphosphate pocket. Residue arginine 96 coordinates isopentenyl diphosphate. Residues lysine 181, threonine 182, glutamine 220, and lysine 237 each coordinate (2E)-geranyl diphosphate.

Belongs to the FPP/GGPP synthase family. Mg(2+) is required as a cofactor.

It localises to the cytoplasm. The catalysed reaction is isopentenyl diphosphate + (2E)-geranyl diphosphate = (2E,6E)-farnesyl diphosphate + diphosphate. The sequence is that of Farnesyl diphosphate synthase (ispA) from Escherichia coli (strain K12).